Here is a 282-residue protein sequence, read N- to C-terminus: MTGESGAAAAPSITLNDEHTMPVLGLGVAELSDDETERAVSAALEIGCRLIDTAYAYGNEAAVGRAIAASGVAREELFVTTKLATPDQGFTRSQEACRASLDRLGLDYVDLYLIHWPAPPVGKYVDAWGGMIQSRGEGHARSIGVSNFTAENIENLIDLTFVTPAVNQIELHPLLNQDELRKANAQHTVVTQSYCPLALGRLLDNPTVTSIASEYVKTPAQVLLRWNLQLGNAVVVRSARPERIASNFDVFDFELAAEHMDALGGLNDGTRVREDPLTYAGT.

Tyr57 (proton donor) is an active-site residue. Leu197, Val235, Arg237, Ser238, Ala239, Arg243, Ser246, Asn247, and Arg273 together coordinate NADPH.

This sequence belongs to the aldo/keto reductase family.

This Mycobacterium tuberculosis (strain CDC 1551 / Oshkosh) protein is Aldo-keto reductase MT3049.